The chain runs to 389 residues: Allantoicase (389 aa).

It belongs to the allantoicase family.

The enzyme catalyses allantoate + H2O = (S)-ureidoglycolate + urea. Its pathway is nitrogen metabolism; (S)-allantoin degradation; (S)-ureidoglycolate from allantoate (aminidohydrolase route): step 1/1. Its function is as follows. Utilization of purines as secondary nitrogen sources, when primary sources are limiting. The sequence is that of Allantoicase (allc) from Xenopus tropicalis (Western clawed frog).